The following is a 734-amino-acid chain: Photosystem I P700 chlorophyll a apoprotein A2 (734 aa).

A run of 8 helical transmembrane segments spans residues 46-69 (IFASHFGQLAIIFLWTSGNLFHVA), 135-158 (LYTGALFLLFLSALSLIGGWLHLQ), 175-199 (LNHHLSGLFGVSSLAWTGHLVHVAI), 273-291 (MAHHHLAIAILFLIAGHMY), 330-353 (IHFQLGLALASLGVITSLVAQHMY), 369-395 (AALYTHHQYIAGFIMTGAFAHGAIFFI), 417-439 (AIISHLSWASLFLGFHTLGLYVH), and 517-535 (FLVHHAIALGLHTTTLILV). 2 residues coordinate [4Fe-4S] cluster: Cys-559 and Cys-568. 2 consecutive transmembrane segments (helical) span residues 575–596 (AFYLAVFWMLNTIGWVTFYWHW) and 643–665 (LSVWAWMFLFGHLVWATGFMFLI). Chlorophyll a is bound by residues His-654, Met-662, and Tyr-670. Trp-671 contributes to the phylloquinone binding site. A helical membrane pass occupies residues 707 to 727 (LVGLAHFSVGYIFTYAAFLIA).

It belongs to the PsaA/PsaB family. In terms of assembly, the PsaA/B heterodimer binds the P700 chlorophyll special pair and subsequent electron acceptors. PSI consists of a core antenna complex that captures photons, and an electron transfer chain that converts photonic excitation into a charge separation. The eukaryotic PSI reaction center is composed of at least 11 subunits. It depends on P700 is a chlorophyll a/chlorophyll a' dimer, A0 is one or more chlorophyll a, A1 is one or both phylloquinones and FX is a shared 4Fe-4S iron-sulfur center. as a cofactor.

The protein localises to the plastid. Its subcellular location is the chloroplast thylakoid membrane. The catalysed reaction is reduced [plastocyanin] + hnu + oxidized [2Fe-2S]-[ferredoxin] = oxidized [plastocyanin] + reduced [2Fe-2S]-[ferredoxin]. In terms of biological role, psaA and PsaB bind P700, the primary electron donor of photosystem I (PSI), as well as the electron acceptors A0, A1 and FX. PSI is a plastocyanin-ferredoxin oxidoreductase, converting photonic excitation into a charge separation, which transfers an electron from the donor P700 chlorophyll pair to the spectroscopically characterized acceptors A0, A1, FX, FA and FB in turn. Oxidized P700 is reduced on the lumenal side of the thylakoid membrane by plastocyanin. The protein is Photosystem I P700 chlorophyll a apoprotein A2 of Crucihimalaya wallichii (Rock-cress).